The sequence spans 229 residues: Secreted RxLR effector protein PITG_22926 (229 aa).

A signal peptide spans 1–23 (MRCNHTLCVVAITFLVSWSQTLS). Residues 34–45 (PLVRSVSATEER) carry the RxLR-dEER motif.

The protein belongs to the RxLR effector family.

It localises to the secreted. Its subcellular location is the host nucleus. Functionally, secreted effector that acts as a RNA silencing suppressor, probably by inhibiting the biogenesis of small RNAs in the host plant, to manipulate host immune responses and promote Phytophthora infection. The protein is Secreted RxLR effector protein PITG_22926 of Phytophthora infestans (strain T30-4) (Potato late blight agent).